A 310-amino-acid polypeptide reads, in one-letter code: Lymphotoxin-beta (310 aa).

The Cytoplasmic segment spans residues 1-27; that stretch reads MGALGLQGRGGRPQGTGCLLLAVAGAT. Residues 28–48 form a helical; Signal-anchor for type II membrane protein membrane-spanning segment; the sequence is SLVTLLLAVPITVLAVLALVP. The Extracellular segment spans residues 49 to 310; that stretch reads QEQGGLVMES…LGKCLHSANV (262 aa). The tract at residues 67–86 is disordered; that stretch reads QGLSKSNGLPSRLHSQIPSS. Residues 138-293 form the THD domain; it reads PAAHLIGAWM…GKTFFGAVMV (156 aa). N-linked (GlcNAc...) asparagine glycosylation is present at Asn272.

It belongs to the tumor necrosis factor family. In terms of assembly, heterotrimer of either two LTB and one LTA subunits or (less prevalent) two LTA and one LTB subunits.

It is found in the membrane. In terms of biological role, cytokine that binds to LTBR/TNFRSF3. May play a specific role in immune response regulation. Provides the membrane anchor for the attachment of the heterotrimeric complex to the cell surface. The polypeptide is Lymphotoxin-beta (LTB) (Marmota monax (Woodchuck)).